The primary structure comprises 358 residues: Isopentenyl-diphosphate delta-isomerase (358 aa).

12-13 (RK) provides a ligand contact to substrate. Residues 69-71 (AMT), Ser-99, and Asn-128 contribute to the FMN site. Gln-158 contributes to the substrate binding site. Glu-159 is a binding site for Mg(2+). FMN contacts are provided by residues Lys-190, Thr-220, 267-269 (GIR), and 288-289 (AG).

It belongs to the IPP isomerase type 2 family. As to quaternary structure, homooctamer. Dimer of tetramers. It depends on FMN as a cofactor. Requires NADPH as cofactor. The cofactor is Mg(2+).

Its subcellular location is the cytoplasm. The enzyme catalyses isopentenyl diphosphate = dimethylallyl diphosphate. Functionally, involved in the biosynthesis of isoprenoids. Catalyzes the 1,3-allylic rearrangement of the homoallylic substrate isopentenyl (IPP) to its allylic isomer, dimethylallyl diphosphate (DMAPP). This chain is Isopentenyl-diphosphate delta-isomerase, found in Listeria welshimeri serovar 6b (strain ATCC 35897 / DSM 20650 / CCUG 15529 / CIP 8149 / NCTC 11857 / SLCC 5334 / V8).